We begin with the raw amino-acid sequence, 284 residues long: Pantothenate synthetase (284 aa).

30 to 37 is a binding site for ATP; the sequence is MGNLHDGH. H37 serves as the catalytic Proton donor. Q61 provides a ligand contact to (R)-pantoate. Q61 contacts beta-alanine. 149–152 is a binding site for ATP; that stretch reads GEKD. Q155 contributes to the (R)-pantoate binding site. ATP contacts are provided by residues V178 and 186–189; that span reads LSSR.

Belongs to the pantothenate synthetase family. Homodimer.

Its subcellular location is the cytoplasm. The enzyme catalyses (R)-pantoate + beta-alanine + ATP = (R)-pantothenate + AMP + diphosphate + H(+). It participates in cofactor biosynthesis; (R)-pantothenate biosynthesis; (R)-pantothenate from (R)-pantoate and beta-alanine: step 1/1. In terms of biological role, catalyzes the condensation of pantoate with beta-alanine in an ATP-dependent reaction via a pantoyl-adenylate intermediate. The sequence is that of Pantothenate synthetase from Klebsiella pneumoniae subsp. pneumoniae (strain ATCC 700721 / MGH 78578).